The primary structure comprises 60 residues: LKCNKLIPLAYKTCPAGKNLCYKMYMVSNKTVPVKRGCIDVCPKNSLVLKYECCNTDRCN.

4 disulfide bridges follow: cysteine 3–cysteine 21, cysteine 14–cysteine 38, cysteine 42–cysteine 53, and cysteine 54–cysteine 59.

Belongs to the three-finger toxin family. Short-chain subfamily. Type IA cytotoxin sub-subfamily. In terms of assembly, monomer in solution; Homodimer and oligomer in the presence of negatively charged lipids forming a pore with a size ranging between 20 and 30 Angstroms. Expressed by the venom gland.

It is found in the secreted. The protein localises to the target cell membrane. Its function is as follows. Shows cytolytic activity on many different cells by forming pore in lipid membranes. In vivo, increases heart rate or kills the animal by cardiac arrest. In addition, it binds to heparin with high affinity, interacts with Kv channel-interacting protein 1 (KCNIP1) in a calcium-independent manner, and binds to integrin alpha-V/beta-3 (ITGAV/ITGB3) with moderate affinity. The chain is Cytotoxin 1 from Naja naja (Indian cobra).